The following is a 202-amino-acid chain: Glycerol-3-phosphate acyltransferase (202 aa).

Helical transmembrane passes span 2 to 22 (MIVI…GYVI), 54 to 74 (FLVT…PLWL), 88 to 108 (NGLI…YLGF), 120 to 140 (VILG…FGIL), 141 to 161 (YLTK…VIGA), and 162 to 182 (LLIR…LLII).

It belongs to the PlsY family. Probably interacts with PlsX.

The protein resides in the cell membrane. It carries out the reaction an acyl phosphate + sn-glycerol 3-phosphate = a 1-acyl-sn-glycero-3-phosphate + phosphate. It participates in lipid metabolism; phospholipid metabolism. Its function is as follows. Catalyzes the transfer of an acyl group from acyl-phosphate (acyl-PO(4)) to glycerol-3-phosphate (G3P) to form lysophosphatidic acid (LPA). This enzyme utilizes acyl-phosphate as fatty acyl donor, but not acyl-CoA or acyl-ACP. This is Glycerol-3-phosphate acyltransferase from Staphylococcus saprophyticus subsp. saprophyticus (strain ATCC 15305 / DSM 20229 / NCIMB 8711 / NCTC 7292 / S-41).